We begin with the raw amino-acid sequence, 227 residues long: Cytosolic-abundant heat soluble protein 106094 (227 aa).

The disordered stretch occupies residues 1–28 (MEAMNMNIPRDAMFVPPPESEQNGYHEK). Positions 90–140 (VEEARRDYAAKTRENEMLGQQYEKELERKSEAYRKHQEVEADKIRKELEKQ) form a coiled coil. CAHS motif stretches follow at residues 122-140 (YRKH…LEKQ) and 159-177 (QKRM…MDRE). Positions 198–227 (LDSSAAGTESGGHVVSQSEKFTERNREMKR) are disordered. Over residues 217 to 227 (KFTERNREMKR) the composition is skewed to basic and acidic residues.

The protein belongs to the Cytosolic-abundant heat soluble protein (CAHS) family.

It localises to the cytoplasm. Functionally, CAHS proteins are cytosolic heat soluble proteins that seem to contribute to the anhydrobiosis in tardigrades, but their specific mechanisms are yet to be identified. It is possible that protection during anhydrobiosis might occur via the stabilization of vitrifying small molecules such as sugars, but not via the direct glass transition of CAHS proteins themselves. This Paramacrobiotus richtersi (Water bear) protein is Cytosolic-abundant heat soluble protein 106094.